Here is a 347-residue protein sequence, read N- to C-terminus: Holliday junction branch migration complex subunit RuvB (347 aa).

The segment at 1-185 (MSDDPTTPEL…FGFTAHLEFY (185 aa)) is large ATPase domain (RuvB-L). Residues Leu-24, Arg-25, Gly-66, Lys-69, Thr-70, Thr-71, 132 to 134 (EDF), Arg-175, Tyr-185, and Arg-222 each bind ATP. Thr-70 is a binding site for Mg(2+). The interval 186–255 (DEGELAQVLA…AVHAALELYD (70 aa)) is small ATPAse domain (RuvB-S). The tract at residues 258–347 (ELGLDRLDRA…SQPPSLMDDL (90 aa)) is head domain (RuvB-H). 2 residues coordinate DNA: Arg-313 and Arg-318.

It belongs to the RuvB family. In terms of assembly, homohexamer. Forms an RuvA(8)-RuvB(12)-Holliday junction (HJ) complex. HJ DNA is sandwiched between 2 RuvA tetramers; dsDNA enters through RuvA and exits via RuvB. An RuvB hexamer assembles on each DNA strand where it exits the tetramer. Each RuvB hexamer is contacted by two RuvA subunits (via domain III) on 2 adjacent RuvB subunits; this complex drives branch migration. In the full resolvosome a probable DNA-RuvA(4)-RuvB(12)-RuvC(2) complex forms which resolves the HJ.

The protein resides in the cytoplasm. It carries out the reaction ATP + H2O = ADP + phosphate + H(+). Functionally, the RuvA-RuvB-RuvC complex processes Holliday junction (HJ) DNA during genetic recombination and DNA repair, while the RuvA-RuvB complex plays an important role in the rescue of blocked DNA replication forks via replication fork reversal (RFR). RuvA specifically binds to HJ cruciform DNA, conferring on it an open structure. The RuvB hexamer acts as an ATP-dependent pump, pulling dsDNA into and through the RuvAB complex. RuvB forms 2 homohexamers on either side of HJ DNA bound by 1 or 2 RuvA tetramers; 4 subunits per hexamer contact DNA at a time. Coordinated motions by a converter formed by DNA-disengaged RuvB subunits stimulates ATP hydrolysis and nucleotide exchange. Immobilization of the converter enables RuvB to convert the ATP-contained energy into a lever motion, pulling 2 nucleotides of DNA out of the RuvA tetramer per ATP hydrolyzed, thus driving DNA branch migration. The RuvB motors rotate together with the DNA substrate, which together with the progressing nucleotide cycle form the mechanistic basis for DNA recombination by continuous HJ branch migration. Branch migration allows RuvC to scan DNA until it finds its consensus sequence, where it cleaves and resolves cruciform DNA. The protein is Holliday junction branch migration complex subunit RuvB of Leifsonia xyli subsp. xyli (strain CTCB07).